Consider the following 452-residue polypeptide: Caspase-2 (452 aa).

A2 carries the N-acetylalanine modification. Residues 2–169 constitute a propeptide that is removed on maturation; the sequence is AAPSAGSWST…TVEHSLDNKD (168 aa). In terms of domain architecture, CARD spans 32–121; that stretch reads MHPHHQETLK…GHLEDMLLTT (90 aa). S157 is subject to Phosphoserine. Residues H277 and C320 contribute to the active site. Positions 326 to 333 are excised as a propeptide; the sequence is DRGVDQQD. The span at 327-336 shows a compositional bias: basic and acidic residues; sequence RGVDQQDGKN. The disordered stretch occupies residues 327–354; the sequence is RGVDQQDGKNHAGSPGCEESDAGKEKLP. S340 is subject to Phosphoserine.

The protein belongs to the peptidase C14A family. In terms of assembly, heterotetramer that consists of two anti-parallel arranged heterodimers, each one formed by a p18 subunit and a p12 subunit. Forms a complex named the PIDDosome with PIDD1 and CRADD. Interacts with NOL3 (via CARD domain); inhibits CASP2 activity in a phosphorylation-dependent manner. Post-translationally, the mature protease can process its own propeptide, but not that of other caspases. Expressed at higher levels in the embryonic lung, liver and kidney than in the heart and brain. In adults, higher level expression is seen in the placenta, lung, kidney, and pancreas than in the heart, brain, liver and skeletal muscle.

The catalysed reaction is Strict requirement for an Asp residue at P1, with 316-Asp being essential for proteolytic activity and has a preferred cleavage sequence of Val-Asp-Val-Ala-Asp-|-.. In terms of biological role, is a regulator of the cascade of caspases responsible for apoptosis execution. Might function by either activating some proteins required for cell death or inactivating proteins necessary for cell survival. Associates with PIDD1 and CRADD to form the PIDDosome, a complex that activates CASP2 and triggers apoptosis in response to genotoxic stress. Functionally, acts as a positive regulator of apoptosis. Its function is as follows. Acts as a negative regulator of apoptosis. May function as an endogenous apoptosis inhibitor that antagonizes caspase activation and cell death. This Homo sapiens (Human) protein is Caspase-2 (CASP2).